The following is a 119-amino-acid chain: Large ribosomal subunit protein bL20 (119 aa).

It belongs to the bacterial ribosomal protein bL20 family.

Binds directly to 23S ribosomal RNA and is necessary for the in vitro assembly process of the 50S ribosomal subunit. It is not involved in the protein synthesizing functions of that subunit. The protein is Large ribosomal subunit protein bL20 of Heliobacterium modesticaldum (strain ATCC 51547 / Ice1).